Consider the following 245-residue polypeptide: Small ribosomal subunit protein uS2 (245 aa).

The interval 226–245 (GGGANVGEMENPPVEATADA) is disordered.

The protein belongs to the universal ribosomal protein uS2 family.

This Erythrobacter litoralis (strain HTCC2594) protein is Small ribosomal subunit protein uS2.